A 532-amino-acid polypeptide reads, in one-letter code: Amidophosphoribosyltransferase 3, chloroplastic (532 aa).

A chloroplast-targeting transit peptide spans 1–59 (MAFSVEEISSILPNSLSANPRNVSQNTISPSFFKPSLKPYASKTLISLSCRRSLSPVFS). Residue Cys77 is the Nucleophile of the active site. Residues 77 to 296 (CGVVGIHGDP…PGEIVVVDRN (220 aa)) form the Glutamine amidotransferase type-2 domain. [4Fe-4S] cluster contacts are provided by Cys313, Cys459, Cys511, and Cys514.

This sequence in the C-terminal section; belongs to the purine/pyrimidine phosphoribosyltransferase family. It depends on [4Fe-4S] cluster as a cofactor. The cofactor is Mg(2+). Mostly expressed at low levels in leaves, and, to a lower extent, in cotyledons.

The protein resides in the plastid. It localises to the chloroplast stroma. It catalyses the reaction 5-phospho-beta-D-ribosylamine + L-glutamate + diphosphate = 5-phospho-alpha-D-ribose 1-diphosphate + L-glutamine + H2O. It functions in the pathway purine metabolism; IMP biosynthesis via de novo pathway; N(1)-(5-phospho-D-ribosyl)glycinamide from 5-phospho-alpha-D-ribose 1-diphosphate: step 1/2. With respect to regulation, inhibited by the phenyltriazole acetic acid compound [5-(4-chlorophenyl)-1-isopropyl-1H-[1,2,4]triazol-3-yl]-acetic acid (DAS734), a bleaching herbicide. Repressed by AMP, ADP, ATP and GTP, and slightly by GMP. In terms of biological role, catalyzes the first committed step of 'de novo' purine biosynthesis from glutamine. In Arabidopsis thaliana (Mouse-ear cress), this protein is Amidophosphoribosyltransferase 3, chloroplastic (ASE3).